Consider the following 123-residue polypeptide: Crossover junction endodeoxyribonuclease Hjc (123 aa).

Glu-9 provides a ligand contact to Mg(2+). Ser-29 is a catalytic residue. Mg(2+)-binding residues include Asp-33 and Glu-46.

Belongs to the Holliday junction resolvase Hjc family. Homodimer. Probably interacts with PCNA and RadB. Mg(2+) is required as a cofactor. It depends on Mn(2+) as a cofactor.

It carries out the reaction Endonucleolytic cleavage at a junction such as a reciprocal single-stranded crossover between two homologous DNA duplexes (Holliday junction).. Its activity is regulated as follows. Cleavage inhibited by RadB in the absence (but not presence) of ATP. A structure-specific endonuclease that resolves Holliday junction (HJ) intermediates during genetic recombination. Cleaves 4-way DNA junctions introducing paired nicks in opposing strands, leaving a 5'-terminal phosphate and a 3'-terminal hydroxyl group that are subsequently ligated to produce recombinant products. Cleaves both mobile and immobile junctions. Binds 4-way junction DNA, a synthetic Hj, binding is not competed by dsDNA. The sequence is that of Crossover junction endodeoxyribonuclease Hjc from Pyrococcus furiosus (strain ATCC 43587 / DSM 3638 / JCM 8422 / Vc1).